We begin with the raw amino-acid sequence, 358 residues long: Ferredoxin--NADP reductase (358 aa).

Asp38, Gln46, Tyr51, Val91, Phe126, Asp301, and Thr341 together coordinate FAD.

It belongs to the ferredoxin--NADP reductase type 2 family. As to quaternary structure, homodimer. It depends on FAD as a cofactor.

The catalysed reaction is 2 reduced [2Fe-2S]-[ferredoxin] + NADP(+) + H(+) = 2 oxidized [2Fe-2S]-[ferredoxin] + NADPH. The polypeptide is Ferredoxin--NADP reductase (Paracidovorax citrulli (strain AAC00-1) (Acidovorax citrulli)).